The chain runs to 1157 residues: Probable inactive leucine-rich repeat receptor kinase XIAO (1157 aa).

The first 21 residues, 1–21 (MPPPPRLLFLLVMLLVVAAPG), serve as a signal peptide directing secretion. N-linked (GlcNAc...) asparagine glycosylation is present at asparagine 58. LRR repeat units lie at residues 101-125 (LVYL…LSRI), 127-149 (SLRA…FLAN), 150-172 (LTNL…VSFP), 173-196 (PSLK…VSAS), 198-220 (TSLQ…SLGT), 221-245 (LQDL…LSNC), 247-269 (ALLH…VAAI), 270-293 (PSLQ…AFGG), 296-319 (NSSL…VSLG), 320-343 (KDLQ…LAGA), 344-367 (GGLT…VGQL), 368-391 (TALQ…IGRC), 393-414 (ALQV…ALGG), 415-439 (LRRL…LGNL), 440-463 (SWLE…LFVL), 464-487 (GNLT…IGNL), 489-511 (ALQS…IGNL), 513-536 (NLRV…LFGL), 537-559 (PQLQ…GFSS), 561-583 (WSLR…TYGY), 584-608 (LPSL…LANC), 609-631 (SNLT…DFAR), 632-656 (LGEL…ISNC), 658-680 (SLVT…LSNL), 681-704 (SKLQ…LAQI), and 706-728 (GMLS…LGSR). The N-linked (GlcNAc...) asparagine glycan is linked to asparagine 149. N-linked (GlcNAc...) asparagine glycosylation is found at asparagine 192, asparagine 204, and asparagine 244. N-linked (GlcNAc...) asparagine glycosylation occurs at asparagine 296. N-linked (GlcNAc...) asparagine glycosylation is present at asparagine 438. N-linked (GlcNAc...) asparagine glycans are attached at residues asparagine 465, asparagine 494, and asparagine 524. N-linked (GlcNAc...) asparagine glycans are attached at residues asparagine 567, asparagine 607, asparagine 610, asparagine 655, asparagine 679, asparagine 692, and asparagine 711. A helical transmembrane segment spans residues 765 to 785 (LALLIGVVAATVLLLVLFCCC). The segment at 804–825 (VKKRRRSPGRGSGSSGTSTDSV) is disordered. Residues 849–1144 (FDEENVLSRG…LEGCRVGPDI (296 aa)) enclose the Protein kinase domain. Residues 855-863 (LSRGRHGLV), 930-932 (DYM), 936-939 (NLAT), 980-985 (DVKPQN), and aspartate 998 contribute to the ATP site.

The protein belongs to the protein kinase superfamily. Ser/Thr protein kinase family. Expressed in developing culm, coleoptile, primary root, young spikelet, young leaf blade and leaf sheath, floral meristem primordia, stamen primordia, and lemma and palea primordia.

The protein localises to the cell membrane. Its function is as follows. Functions in the early stages of organ development by regulating cell division rate. Is probably involved in the regulation of a number of cell-cycle genes. May act as regulator of brassinosteroid (BR) signaling and cell-cycle controlling organ growth. The polypeptide is Probable inactive leucine-rich repeat receptor kinase XIAO (Oryza sativa subsp. japonica (Rice)).